A 192-amino-acid polypeptide reads, in one-letter code: Peptidyl-tRNA hydrolase (192 aa).

Residue Y17 coordinates tRNA. Catalysis depends on H22, which acts as the Proton acceptor. Residues F68, N70, and N116 each coordinate tRNA.

This sequence belongs to the PTH family. In terms of assembly, monomer.

The protein localises to the cytoplasm. It carries out the reaction an N-acyl-L-alpha-aminoacyl-tRNA + H2O = an N-acyl-L-amino acid + a tRNA + H(+). Hydrolyzes ribosome-free peptidyl-tRNAs (with 1 or more amino acids incorporated), which drop off the ribosome during protein synthesis, or as a result of ribosome stalling. In terms of biological role, catalyzes the release of premature peptidyl moieties from peptidyl-tRNA molecules trapped in stalled 50S ribosomal subunits, and thus maintains levels of free tRNAs and 50S ribosomes. In Xylella fastidiosa (strain Temecula1 / ATCC 700964), this protein is Peptidyl-tRNA hydrolase.